The following is a 377-amino-acid chain: 4-hydroxy-3-methylbut-2-en-1-yl diphosphate synthase (flavodoxin) (377 aa).

Residues C275, C278, C310, and E317 each coordinate [4Fe-4S] cluster.

Belongs to the IspG family. It depends on [4Fe-4S] cluster as a cofactor.

It catalyses the reaction (2E)-4-hydroxy-3-methylbut-2-enyl diphosphate + oxidized [flavodoxin] + H2O + 2 H(+) = 2-C-methyl-D-erythritol 2,4-cyclic diphosphate + reduced [flavodoxin]. It functions in the pathway isoprenoid biosynthesis; isopentenyl diphosphate biosynthesis via DXP pathway; isopentenyl diphosphate from 1-deoxy-D-xylulose 5-phosphate: step 5/6. In terms of biological role, converts 2C-methyl-D-erythritol 2,4-cyclodiphosphate (ME-2,4cPP) into 1-hydroxy-2-methyl-2-(E)-butenyl 4-diphosphate. The protein is 4-hydroxy-3-methylbut-2-en-1-yl diphosphate synthase (flavodoxin) of Ruegeria sp. (strain TM1040) (Silicibacter sp.).